The primary structure comprises 378 residues: Erythronate-4-phosphate dehydrogenase (378 aa).

Residues serine 45 and threonine 66 each coordinate substrate. Residues aspartate 146 and threonine 175 each coordinate NAD(+). Arginine 208 is an active-site residue. Aspartate 232 is an NAD(+) binding site. Glutamate 237 is an active-site residue. Catalysis depends on histidine 254, which acts as the Proton donor. Glycine 257 lines the NAD(+) pocket. Residue tyrosine 258 participates in substrate binding.

It belongs to the D-isomer specific 2-hydroxyacid dehydrogenase family. PdxB subfamily. As to quaternary structure, homodimer.

Its subcellular location is the cytoplasm. The catalysed reaction is 4-phospho-D-erythronate + NAD(+) = (R)-3-hydroxy-2-oxo-4-phosphooxybutanoate + NADH + H(+). The protein operates within cofactor biosynthesis; pyridoxine 5'-phosphate biosynthesis; pyridoxine 5'-phosphate from D-erythrose 4-phosphate: step 2/5. Functionally, catalyzes the oxidation of erythronate-4-phosphate to 3-hydroxy-2-oxo-4-phosphonooxybutanoate. This is Erythronate-4-phosphate dehydrogenase from Citrobacter koseri (strain ATCC BAA-895 / CDC 4225-83 / SGSC4696).